Consider the following 269-residue polypeptide: 3'(2'),5'-bisphosphate nucleotidase CysQ (269 aa).

Residues glutamate 69, aspartate 89, leucine 91, aspartate 92, and aspartate 216 each coordinate Mg(2+). Glutamate 69 contacts substrate. Substrate is bound by residues 91–94 (LDGT) and aspartate 216.

Belongs to the inositol monophosphatase superfamily. CysQ family. Requires Mg(2+) as cofactor.

It is found in the cell inner membrane. It carries out the reaction adenosine 3',5'-bisphosphate + H2O = AMP + phosphate. Functionally, converts adenosine-3',5'-bisphosphate (PAP) to AMP. The sequence is that of 3'(2'),5'-bisphosphate nucleotidase CysQ from Aggregatibacter actinomycetemcomitans (Actinobacillus actinomycetemcomitans).